The following is a 1914-amino-acid chain: Diacylglycerol kinase eta (1914 aa).

Positions methionine 1 to histidine 10 are enriched in basic and acidic residues. The segment at methionine 1–serine 37 is disordered. The segment covering arginine 23–serine 37 has biased composition (low complexity). A PH domain is found at alanine 82–alanine 175. 2 consecutive Phorbol-ester/DAG-type zinc fingers follow at residues histidine 195–cysteine 245 and proline 268–cysteine 319. One can recognise a DAGKc domain in the interval glycine 350–lysine 486. Disordered stretches follow at residues glutamate 621–glutamate 642, glycine 783–threonine 805, threonine 1016–isoleucine 1053, glutamine 1116–asparagine 1135, and proline 1175–leucine 1216. Positions proline 1175–lysine 1187 are enriched in polar residues. The 64-residue stretch at tryptophan 1851–asparagine 1914 folds into the SAM domain.

It belongs to the eukaryotic diacylglycerol kinase family.

The protein resides in the cytoplasm. It carries out the reaction a 1,2-diacyl-sn-glycerol + ATP = a 1,2-diacyl-sn-glycero-3-phosphate + ADP + H(+). Functionally, phosphorylates diacylglycerol (DAG) to generate phosphatidic acid (PA). This is Diacylglycerol kinase eta from Drosophila sechellia (Fruit fly).